A 2049-amino-acid polypeptide reads, in one-letter code: Non-reducing polyketide synthase hmp3 (2049 aa).

Residues 9–246 (LYFGDQTDSW…NELSIHALQH (238 aa)) are N-terminal acylcarrier protein transacylase (SAT) domain. In terms of domain architecture, Ketosynthase family 3 (KS3) spans 365–793 (PGRIAIVGMA…GGNASLILED (429 aa)). Residues C538, H673, and H712 each act as for beta-ketoacyl synthase activity in the active site. The tract at residues 887 to 1146 (VFVFTGQGSH…VDFVGALGAL (260 aa)) is malonyl-CoA:ACP transacylase (MAT) domain. Catalysis depends on S978, which acts as the For acyl/malonyl transferase activity. The N-terminal hotdog fold stretch occupies residues 1265–1404 (QQIVEESSSP…AQTLQTSWNR (140 aa)). In terms of domain architecture, PKS/mFAS DH spans 1265 to 1573 (QQIVEESSSP…FHEVSNNVLD (309 aa)). Residues 1269-1572 (EESSSPSLHV…SFHEVSNNVL (304 aa)) form a product template (PT) domain region. Positions 1425–1573 (GHRMLPSILY…FHEVSNNVLD (149 aa)) are C-terminal hotdog fold. In terms of domain architecture, Carrier spans 1626 to 1704 (SSESELFHTI…DLRNEFARSS (79 aa)). O-(pantetheine 4'-phosphoryl)serine is present on S1663. Residues 1700–1747 (FARSSTSTPPSKTFSEFSIVDATPESTRSSSRAPSEKKEPAPASEKSE) form a disordered region. The span at 1703-1717 (SSTSTPPSKTFSEFS) shows a compositional bias: low complexity. Positions 1723 to 1732 (PESTRSSSRA) are enriched in polar residues. Positions 1733–1747 (PSEKKEPAPASEKSE) are enriched in basic and acidic residues. Residues 1761–1951 (SPLPSARITL…KRTAIIWAKK (191 aa)) are thioesterase (TE) domain.

Its pathway is secondary metabolite biosynthesis. Functionally, non-reducing polyketide synthase; part of the gene cluster that mediates the biosynthesis of hypothemycin, a resorcylic acid lactone (RAL) that irreversibly inhibits a subset of protein kinases with a conserved cysteine in the ATP binding site such as human ERK2. The first step is performed by both PKSs hmp3 and hmp8 and leads to the production of 7',8'-dehydrozearalenol (DHZ). The highly reducing PKS hpm8 synthesizes the reduced hexaketide (7S,11S,2E,8E)-7,11-dihydroxy-dodeca-2,8-dienoate, which is transferred downstream to the non-reducing PKS hpm3. Hpm3 then extends the reduced hexaketide to a nonaketide, after which regioselective cyclization and macrolactonization affords DHZ. The next step is the conversion of DHZ into aigialomycin C and is performed by the O-methyltransferase hmp5, the FAD-binding monooxygenase hmp7, and the cytochrome P450 monooxygenase hmp1. The wide substrate tolerance of the hmp5 and hmp7 implies that the reactions from DHZ to aigialomycin C can occur in any order. The steps from aigialomycin C to hypothemycin are less well established. The FAD-linked oxidoreductase hmp9 presumably catalyzes oxidation of the C-6' hydroxyl to a ketone. The timing of this oxidation is important, since the resulting enone functional group is a Michael acceptor that can react spontaneously with glutathione, an abundant metabolite in fungal cells. The glutathione S-transferase hmp2 catalyzes cis-trans isomerization of the 7',8' double bond with equilibrium favoring the trans isomer. The hpm6-encoded transporter might preferentially pump hypothemycin out of the cell relative to the trans isomer aigialomycin A. The cis-to-trans isomerization may be coupled with C-4' hydroxylation, since all known hypothemycin analogs containing the enone functional group also have hydroxyl groups at both C-4' and C-5'. This is Non-reducing polyketide synthase hmp3 from Hypomyces subiculosus (Nectria subiculosa).